A 186-amino-acid chain; its full sequence is Ribosome-recycling factor (186 aa).

The protein belongs to the RRF family.

Its subcellular location is the cytoplasm. Its function is as follows. Responsible for the release of ribosomes from messenger RNA at the termination of protein biosynthesis. May increase the efficiency of translation by recycling ribosomes from one round of translation to another. The protein is Ribosome-recycling factor of Phocaeicola vulgatus (strain ATCC 8482 / DSM 1447 / JCM 5826 / CCUG 4940 / NBRC 14291 / NCTC 11154) (Bacteroides vulgatus).